A 250-amino-acid polypeptide reads, in one-letter code: 2,5-dichloro-2,5-cyclohexadiene-1,4-diol dehydrogenase LinX (250 aa).

Residues D38, D64, V65, Y156, K160, T191, and T194 each contribute to the NAD(+) site. The Proton acceptor role is filled by Y156.

Belongs to the short-chain dehydrogenases/reductases (SDR) family.

The catalysed reaction is 2,5-dichlorocyclohexa-2,5-dien-1,4-diol + NAD(+) = 2,5-dichlorohydroquinone + NADH + H(+). In terms of biological role, catalyzes the degradation of 2,5-dichloro-2,5-cyclohexadiene-1,4-diol (2,5-DDOL) into 2,5-dichlorohydroquinone (2,5-DCHQ) in vitro. LinX appears not to be involved in gamma-hexachlorocyclohexane (gamma-HCH) degradation pathway, in contrast to LinC which has the same enzymatic activity. The polypeptide is 2,5-dichloro-2,5-cyclohexadiene-1,4-diol dehydrogenase LinX (Sphingobium indicum (strain DSM 16412 / CCM 7286 / MTCC 6364 / B90A)).